The chain runs to 122 residues: Large ribosomal subunit protein uL24 (122 aa).

It belongs to the universal ribosomal protein uL24 family. Part of the 50S ribosomal subunit.

Its function is as follows. One of two assembly initiator proteins, it binds directly to the 5'-end of the 23S rRNA, where it nucleates assembly of the 50S subunit. In terms of biological role, one of the proteins that surrounds the polypeptide exit tunnel on the outside of the subunit. The chain is Large ribosomal subunit protein uL24 from Trichodesmium erythraeum (strain IMS101).